The following is a 297-amino-acid chain: Vacuolar protein sorting-associated protein 26C (297 aa).

The protein belongs to the VPS26 family. In terms of assembly, component of the commander complex that is essential for endosomal recycling of transmembrane cargos; the commander complex is composed of the CCC subcomplex and the retriever subcomplex. Component of the heterotrimeric retriever complex consisting of VPS26C, VPS29 and VPS35L; within the complex interacts with VPS35L. Interacts with SNX17 (via C-terminus); the interaction is direct and associates SNX17 with the retriever complex. Interacts with SNX31; the interaction is direct. Ubiquitously expressed.

The protein localises to the endosome. Functionally, component of the commander complex that is essential for endosomal recycling of transmembrane cargos; the commander complex is composed of the CCC subcomplex and the retriever subcomplex. Component of the retriever complex, which is a heterotrimeric complex related to retromer cargo-selective complex (CSC) and essential for retromer-independent retrieval and recycling of numerous cargos such as integrin alpha-5/beta-1 (ITGA5:ITGB1). The recruitment of the retriever complex to the endosomal membrane involves CCC and WASH complexes. In the endosomes, drives the retriever and recycling of NxxY-motif-containing cargo proteins by coupling to SNX17, a cargo essential for the homeostatic maintenance of numerous cell surface proteins associated with processes that include cell migration, cell adhesion, nutrient supply and cell signaling. Its function is as follows. (Microbial infection) The heterotrimeric retriever complex, in collaboration with the CCC complex, mediates the exit of human papillomavirus to the cell surface. This is Vacuolar protein sorting-associated protein 26C from Homo sapiens (Human).